Reading from the N-terminus, the 449-residue chain is Asparagine--tRNA ligase (449 aa).

The protein belongs to the class-II aminoacyl-tRNA synthetase family. Homodimer.

It localises to the cytoplasm. The enzyme catalyses tRNA(Asn) + L-asparagine + ATP = L-asparaginyl-tRNA(Asn) + AMP + diphosphate + H(+). In Mesomycoplasma hyopneumoniae (strain J / ATCC 25934 / NCTC 10110) (Mycoplasma hyopneumoniae), this protein is Asparagine--tRNA ligase.